The following is a 407-amino-acid chain: tRNA(Ile2) 2-agmatinylcytidine synthetase TiaS (407 aa).

The protein belongs to the TiaS family.

Its subcellular location is the cytoplasm. It carries out the reaction cytidine(34) in tRNA(Ile2) + agmatine + ATP + H2O = 2-agmatinylcytidine(34) in tRNA(Ile2) + AMP + 2 phosphate + 2 H(+). Functionally, ATP-dependent agmatine transferase that catalyzes the formation of 2-agmatinylcytidine (agm2C) at the wobble position (C34) of tRNA(Ile2), converting the codon specificity from AUG to AUA. The protein is tRNA(Ile2) 2-agmatinylcytidine synthetase TiaS of Caldivirga maquilingensis (strain ATCC 700844 / DSM 13496 / JCM 10307 / IC-167).